Here is a 388-residue protein sequence, read N- to C-terminus: Bifunctional enzyme IspD/IspF (388 aa).

Residues 1–228 form a 2-C-methyl-D-erythritol 4-phosphate cytidylyltransferase region; that stretch reads MRIAALLLAA…GVIDRNLLPR (228 aa). Positions 228–388 are 2-C-methyl-D-erythritol 2,4-cyclodiphosphate synthase; that stretch reads RVGLGYDVHA…SIMVPDNGEA (161 aa). A divalent metal cation contacts are provided by D234 and H236. 4-CDP-2-C-methyl-D-erythritol 2-phosphate is bound by residues 234-236 and 260-261; these read DVH and HS. A divalent metal cation is bound at residue H268. Residues 282 to 284, 358 to 361, F365, and R368 contribute to the 4-CDP-2-C-methyl-D-erythritol 2-phosphate site; these read DIG and TTSE.

The protein in the N-terminal section; belongs to the IspD/TarI cytidylyltransferase family. IspD subfamily. It in the C-terminal section; belongs to the IspF family. Requires a divalent metal cation as cofactor.

It catalyses the reaction 2-C-methyl-D-erythritol 4-phosphate + CTP + H(+) = 4-CDP-2-C-methyl-D-erythritol + diphosphate. The enzyme catalyses 4-CDP-2-C-methyl-D-erythritol 2-phosphate = 2-C-methyl-D-erythritol 2,4-cyclic diphosphate + CMP. The protein operates within isoprenoid biosynthesis; isopentenyl diphosphate biosynthesis via DXP pathway; isopentenyl diphosphate from 1-deoxy-D-xylulose 5-phosphate: step 2/6. Its pathway is isoprenoid biosynthesis; isopentenyl diphosphate biosynthesis via DXP pathway; isopentenyl diphosphate from 1-deoxy-D-xylulose 5-phosphate: step 4/6. Its function is as follows. Bifunctional enzyme that catalyzes the formation of 4-diphosphocytidyl-2-C-methyl-D-erythritol from CTP and 2-C-methyl-D-erythritol 4-phosphate (MEP) (IspD), and catalyzes the conversion of 4-diphosphocytidyl-2-C-methyl-D-erythritol 2-phosphate (CDP-ME2P) to 2-C-methyl-D-erythritol 2,4-cyclodiphosphate (ME-CPP) with a corresponding release of cytidine 5-monophosphate (CMP) (IspF). This Gluconobacter oxydans (strain 621H) (Gluconobacter suboxydans) protein is Bifunctional enzyme IspD/IspF.